Consider the following 429-residue polypeptide: Adenylosuccinate synthetase (429 aa).

GTP-binding positions include 15–21 (GDEGKGK) and 43–45 (GHV). Aspartate 16 functions as the Proton acceptor in the catalytic mechanism. Residues aspartate 16 and glycine 43 each coordinate Mg(2+). IMP contacts are provided by residues 16-19 (DEGK), 41-44 (NAGH), threonine 131, arginine 145, glutamine 225, threonine 240, and arginine 304. Residue histidine 44 is the Proton donor of the active site. 300–306 (SNTKRPR) provides a ligand contact to substrate. GTP contacts are provided by residues arginine 306, 332–334 (LLD), and 414–416 (SVG).

The protein belongs to the adenylosuccinate synthetase family. As to quaternary structure, homodimer. Mg(2+) is required as a cofactor.

The protein localises to the cytoplasm. It catalyses the reaction IMP + L-aspartate + GTP = N(6)-(1,2-dicarboxyethyl)-AMP + GDP + phosphate + 2 H(+). It participates in purine metabolism; AMP biosynthesis via de novo pathway; AMP from IMP: step 1/2. In terms of biological role, plays an important role in the de novo pathway of purine nucleotide biosynthesis. Catalyzes the first committed step in the biosynthesis of AMP from IMP. The sequence is that of Adenylosuccinate synthetase from Mesoplasma florum (strain ATCC 33453 / NBRC 100688 / NCTC 11704 / L1) (Acholeplasma florum).